The following is a 57-amino-acid chain: Large ribosomal subunit protein bL33 (57 aa).

It belongs to the bacterial ribosomal protein bL33 family.

This chain is Large ribosomal subunit protein bL33, found in Akkermansia muciniphila (strain ATCC BAA-835 / DSM 22959 / JCM 33894 / BCRC 81048 / CCUG 64013 / CIP 107961 / Muc).